The primary structure comprises 396 residues: MAAEATLGPNVSWWAPSNASGCPGCGVNASDGPGSAPRPLDAWLVPLFFAALMLLGLVGNSLVIFVICRHKHMQTVTNFYIANLAATDVTFLLCCVPFTALLYPLPTWVLGDFMCKFVNYIQQVSVQATCATLTAMSVDRWYVTVFPLRALHRRTPRLALTVSLSIWVGSAAVSAPVLALHRLSPGPHTYCSEAFPSRALERAFALYNLLALYLLPLLATCACYGAMLRHLGRAAVRPAPTDGALQGQLLAQRAGAVRTKVSRLVAAVVLLFAACWGPIQLFLVLQALGPSGAWHPRSYAAYALKIWAHCMSYSNSALNPLLYAFLGSHFRQAFCRVCPCGPQRQRRPHASAHSDRAAPHSVPHSRAAHPVRVRTPEPGNPVRRSPSVQDEHTAPL.

The Extracellular segment spans residues Met1 to Pro46. Residues Asn10, Asn18, and Asn28 are each glycosylated (N-linked (GlcNAc...) asparagine). Residues Leu47–Ile67 form a helical membrane-spanning segment. Topologically, residues Cys68 to Thr90 are cytoplasmic. A helical transmembrane segment spans residues Phe91–Gly111. The Extracellular portion of the chain corresponds to Asp112–Tyr120. Cysteines 115 and 191 form a disulfide. The helical transmembrane segment at Ile121–Val138 threads the bilayer. At Asp139–Ala159 the chain is on the cytoplasmic side. Residues Leu160 to Leu180 traverse the membrane as a helical segment. The Extracellular portion of the chain corresponds to His181–Arg202. The chain crosses the membrane as a helical span at residues Ala203 to Cys223. Residues Tyr224 to Leu264 lie on the Cytoplasmic side of the membrane. A helical transmembrane segment spans residues Val265–Leu285. The Extracellular portion of the chain corresponds to Gln286 to Lys305. A helical membrane pass occupies residues Ile306–Leu326. The Cytoplasmic portion of the chain corresponds to Gly327–Leu396. Positions Arg346–Leu396 are disordered.

It belongs to the G-protein coupled receptor 1 family. In terms of tissue distribution, highest expression levels in the cerebrum and cecum. Moderate expression in the ovary, colon and placenta. Low levels in the uterus, small intestine, and thymus. Expressed only moderately in the placenta. No expression in kidney tissues. Has a complex and abundant central nervous system expression pattern. Expressed in brain regions such as pons, midbrain, thalamus, hypothalamus, hippocampus, amygdala, cortex, frontal cortex, and striatum. No expression in the cerebellum. Persistent expression is detected in hypothalamus throughout postnatal development, with maximum expression levels at puberty in both male and female. Hypothalamic expression changed throughout the estrus cycle and is significantly increased after gonadectomy, a rise that is prevented by sex steroid replacement both in males and females.

It is found in the cell membrane. Receptor for metastin, a C-terminally amidated peptide of KiSS1. KiSS1 is a metastasis suppressor protein. Activation of the receptor inhibits cell proliferation and cell migration, key characteristics of tumor metastasis. The receptor is essential for normal gonadotropin-released hormone physiology and for puberty. The hypothalamic KiSS1/KISS1R system is a pivotal factor in central regulation of the gonadotropic axis at puberty and in adulthood. Analysis of the transduction pathways activated by the receptor identifies coupling to phospholipase C and intracellular calcium release through pertussis toxin-insensitive G(q) proteins. This chain is KiSS-1 receptor (Kiss1r), found in Rattus norvegicus (Rat).